A 54-amino-acid polypeptide reads, in one-letter code: Ovomucoid (54 aa).

The Kazal-like domain occupies valine 4 to cysteine 54. Intrachain disulfides connect cysteine 6/cysteine 36, cysteine 14/cysteine 33, and cysteine 22/cysteine 54.

Post-translationally, this is the only ovomucoid third domain known to be not glycosylated.

It is found in the secreted. This is Ovomucoid from Struthio camelus (Common ostrich).